A 533-amino-acid polypeptide reads, in one-letter code: Spindle pole body protein CSA6 (533 aa).

2 disordered regions span residues 1–32 and 53–130; these read MEDS…SDLT and DKYD…QEDE. Basic and acidic residues-rich tracts occupy residues 18–30 and 53–68; these read PEIK…KTSD and DKYD…DLTP. Positions 83–94 are enriched in low complexity; that stretch reads PSKFSSSIPQKP. Residues 103–121 are compositionally biased toward polar residues; sequence SSPTKNYTDHINQLRSGPN. Residues 136–236 adopt a coiled-coil conformation; that stretch reads KYEIKRLKQE…RSERDELVKD (101 aa). The span at 309-318 shows a compositional bias: basic and acidic residues; that stretch reads EKDKPSEDKT. 2 disordered regions span residues 309–329 and 349–453; these read EKDK…SKDA and SANS…QSTK. 2 stretches are compositionally biased toward polar residues: residues 349–392 and 405–421; these read SANS…SNSQ and IYSS…QSSH. Residues 432–445 show a composition bias toward basic and acidic residues; that stretch reads PRVERDHWTDRPPS.

The protein resides in the cytoplasm. It is found in the cytoskeleton. The protein localises to the microtubule organizing center. Its subcellular location is the spindle pole body. Its function is as follows. Plays a role in mitotic spindle pole body organization, possibly at the point of spindle pole body separation. Required for mitotic exit. The polypeptide is Spindle pole body protein CSA6 (Candida dubliniensis (strain CD36 / ATCC MYA-646 / CBS 7987 / NCPF 3949 / NRRL Y-17841) (Yeast)).